Consider the following 102-residue polypeptide: Small ubiquitin-related modifier 1-A (102 aa).

Positions M1–G20 are disordered. The 78-residue stretch at D21–G98 folds into the Ubiquitin-like domain. G98 participates in a covalent cross-link: Glycyl lysine isopeptide (Gly-Lys) (interchain with K-? in acceptor proteins). Residues H99–F102 constitute a propeptide that is removed on maturation.

It belongs to the ubiquitin family. SUMO subfamily. As to quaternary structure, interacts with sae2, ube2i, ranbp2, pias1 and pias2. Covalently attached to a number of proteins including rangap1 and ranbp2. Interacts with sox9 and sox10. In terms of processing, cleavage of precursor form by a sentrin-specific protease is necessary for function.

It is found in the nucleus membrane. It localises to the nucleus speckle. The protein resides in the cytoplasm. Its subcellular location is the nucleus. The protein localises to the PML body. It is found in the cell membrane. Functionally, ubiquitin-like protein that can be covalently attached to proteins as a monomer or a lysine-linked polymer. Covalent attachment via an isopeptide bond to its substrates requires prior activation by the E1 complex sae1-sae2 and linkage to the E2 enzyme ube2i. This post-translational modification on lysine residues of proteins plays a crucial role in a number of cellular processes such as nuclear transport, DNA replication and repair, mitosis and signal transduction. Polymeric sumo1 chains are also susceptible to polyubiquitination which functions as a signal for proteasomal degradation of modified proteins. The polypeptide is Small ubiquitin-related modifier 1-A (sumo1-a) (Xenopus laevis (African clawed frog)).